The chain runs to 831 residues: Probable glucan 1,3-beta-glucosidase D (831 aa).

Basic and acidic residues-rich tracts occupy residues 1–24, 44–56, 79–93, 102–115, 137–151, and 198–213; these read MPSHSRSRDRYRSERDPSRRYREV, RRDDYQHDIRSHE, RSHDVEGRRRERSRA, SRRDRNRGGEEYRR, RDGQRARPRDMDREA, and QRERSQEQEQPRMESK. Disordered regions lie at residues 1-179 and 192-241; these read MPSH…SGSH and HYDE…GQSK. Residues 1–297 are Cytoplasmic-facing; sequence MPSHSRSRDR…AQPPFWKRKK (297 aa). Residues 298 to 318 traverse the membrane as a helical; Signal-anchor for type II membrane protein segment; sequence WWIVIGVLVVVLAIVIPVAVV. Residues 319-831 lie on the Extracellular side of the membrane; it reads MSKKHGHDDD…PSFGDLPEYY (513 aa). Asn-376, Asn-381, Asn-393, Asn-410, Asn-442, Asn-546, and Asn-558 each carry an N-linked (GlcNAc...) asparagine glycan. Glu-597 functions as the Proton donor in the catalytic mechanism. N-linked (GlcNAc...) asparagine glycosylation is found at Asn-610, Asn-636, Asn-669, and Asn-689. The active-site Nucleophile is the Glu-702.

It belongs to the glycosyl hydrolase 5 (cellulase A) family.

It is found in the cell membrane. The enzyme catalyses Successive hydrolysis of beta-D-glucose units from the non-reducing ends of (1-&gt;3)-beta-D-glucans, releasing alpha-glucose.. Functionally, glucosidase involved in the degradation of cellulosic biomass. Active on lichenan. The polypeptide is Probable glucan 1,3-beta-glucosidase D (exgD) (Aspergillus oryzae (strain ATCC 42149 / RIB 40) (Yellow koji mold)).